We begin with the raw amino-acid sequence, 325 residues long: KYENVEKGDEAPKKCGVTHTNLESDEPIEKASQLFGTSEQQRFDPRHIELVIVADHGMVMKHNGDLTAVRTWLHQIGNNLNVMFADLNIRITMAGLEMWSEKDLIDIQSAASETLRLFGEWRERYLLNRRMHDNAQLLTTVNLDGDTVGLAYVGGMCDPKNSVGIVQDHSRIAREVAATMAHELGHNLGMAHDGNQCNCGANGCVMSEEIIERTSYQFSDCSKEEYRTFLDNHNPQRILNEPLRTDTVSTPVYGNVLQNSPHPCCDPVTCKPKAWEHCISGPCCRDCKFLRPGTVCRVARGDWNDDFCTGRSSECESNPWNFWNH.

Positions 1–39 (KYENVEKGDEAPKKCGVTHTNLESDEPIEKASQLFGTSE) are excised as a propeptide. Pyrrolidone carboxylic acid is present on Q40. Residues 46–242 (RHIELVIVAD…HNPQRILNEP (197 aa)) enclose the Peptidase M12B domain. H182 contributes to the Zn(2+) binding site. The active site involves E183. Residues H186 and H192 each coordinate Zn(2+). Intrachain disulfides connect C197-C221 and C199-C204. A propeptide spanning residues 243–257 (LRTDTVSTPVYGNVL) is cleaved from the precursor. Positions 250 to 322 (TPVYGNVLQN…SECESNPWNF (73 aa)) constitute a Disintegrin domain. Position 258 is a pyrrolidone carboxylic acid (Q258). 4 disulfide bridges follow: C264/C287, C278/C284, C283/C308, and C296/C315. The short motif at 300–302 (RGD) is the Cell attachment site element.

Belongs to the venom metalloproteinase (M12B) family. P-II subfamily. P-IIe sub-subfamily. In terms of assembly, heterodimer of bitisgabonin and gabonin-1 (bitisgabonin-1) or gabonin-2 (bitisgabonin-2); disulfide-linked. Requires Zn(2+) as cofactor. Expressed by the venom gland.

Its subcellular location is the secreted. In terms of biological role, impairs hemostasis in the envenomed animal. Functionally, in dimer with gabonin-1 (bitisgabonin-1), is a potent inhibitor of the adhesion of the RGD-dependent integrin alpha-5/beta-1 (ITGA5/ITGB1) to immobilized fibronectin. In dimer with gabonin-2 (bitisgabonin-2), preferentially inhibits the adhesion of the alpha-4/beta-1 (ITGA4/ITGB1) and alpha-9/beta-1 (ITGA9/ITGB1) integrins to VCAM-1 and also acts as a strong antagonist of alpha-5/beta-1 (ITGA5/ITGB1). The polypeptide is Zinc metalloproteinase/disintegrin (Bitis gabonica (Gaboon adder)).